Reading from the N-terminus, the 333-residue chain is Anthranilate phosphoribosyltransferase (333 aa).

Residues Gly-81, 84 to 85 (GD), Thr-89, 91 to 94 (NIST), 109 to 117 (KHGNRSVSS), and Ala-121 contribute to the 5-phospho-alpha-D-ribose 1-diphosphate site. Gly-81 serves as a coordination point for anthranilate. Ser-93 lines the Mg(2+) pocket. Asn-112 lines the anthranilate pocket. An anthranilate-binding site is contributed by Arg-167. 2 residues coordinate Mg(2+): Asp-225 and Glu-226.

It belongs to the anthranilate phosphoribosyltransferase family. In terms of assembly, homodimer. The cofactor is Mg(2+).

The enzyme catalyses N-(5-phospho-beta-D-ribosyl)anthranilate + diphosphate = 5-phospho-alpha-D-ribose 1-diphosphate + anthranilate. The protein operates within amino-acid biosynthesis; L-tryptophan biosynthesis; L-tryptophan from chorismate: step 2/5. Catalyzes the transfer of the phosphoribosyl group of 5-phosphorylribose-1-pyrophosphate (PRPP) to anthranilate to yield N-(5'-phosphoribosyl)-anthranilate (PRA). This chain is Anthranilate phosphoribosyltransferase, found in Haemophilus influenzae (strain PittGG).